We begin with the raw amino-acid sequence, 776 residues long: Protein translocase subunit SecA 2 (776 aa).

ATP-binding positions include Q80, 98–102 (GEGKT), and D486.

The protein belongs to the SecA family. Monomer and homodimer. Part of the essential Sec protein translocation apparatus which comprises SecA, SecYEG and auxiliary proteins SecDF. Other proteins may also be involved.

Its subcellular location is the cell membrane. It localises to the cytoplasm. It catalyses the reaction ATP + H2O + cellular proteinSide 1 = ADP + phosphate + cellular proteinSide 2.. In terms of biological role, part of the Sec protein translocase complex. Interacts with the SecYEG preprotein conducting channel. Has a central role in coupling the hydrolysis of ATP to the transfer of proteins into and across the cell membrane, serving as an ATP-driven molecular motor driving the stepwise translocation of polypeptide chains across the membrane. The polypeptide is Protein translocase subunit SecA 2 (Listeria welshimeri serovar 6b (strain ATCC 35897 / DSM 20650 / CCUG 15529 / CIP 8149 / NCTC 11857 / SLCC 5334 / V8)).